A 757-amino-acid polypeptide reads, in one-letter code: Polyribonucleotide nucleotidyltransferase (757 aa).

The Mg(2+) site is built by aspartate 487 and aspartate 493. Residues 554 to 613 form the KH domain; the sequence is PRITTVRVKPDQIRLIIGPGGKTIKGIVDQTGVAIDVEDDGTVNVASADSDAVKRALDII. The S1 motif domain maps to 623-691; sequence GATYKGTVKR…REGKIRLSRR (69 aa). Residues 697–757 form a disordered region; sequence PEGEEGDRAR…PPRERRERRS (61 aa). 2 stretches are compositionally biased toward basic and acidic residues: residues 702–711 and 719–757; these read GDRARERMAQ and PRRD…ERRS.

This sequence belongs to the polyribonucleotide nucleotidyltransferase family. Mg(2+) serves as cofactor.

Its subcellular location is the cytoplasm. The catalysed reaction is RNA(n+1) + phosphate = RNA(n) + a ribonucleoside 5'-diphosphate. Its function is as follows. Involved in mRNA degradation. Catalyzes the phosphorolysis of single-stranded polyribonucleotides processively in the 3'- to 5'-direction. In Sorangium cellulosum (strain So ce56) (Polyangium cellulosum (strain So ce56)), this protein is Polyribonucleotide nucleotidyltransferase.